The sequence spans 218 residues: Thiamine-phosphate synthase (218 aa).

Residues 46-50 and aspartate 83 each bind 4-amino-2-methyl-5-(diphosphooxymethyl)pyrimidine; that span reads QFRDK. The Mg(2+) site is built by aspartate 84 and aspartate 103. Serine 122 contributes to the 4-amino-2-methyl-5-(diphosphooxymethyl)pyrimidine binding site. A 2-[(2R,5Z)-2-carboxy-4-methylthiazol-5(2H)-ylidene]ethyl phosphate-binding site is contributed by 149–151; the sequence is TNS. Lysine 152 contacts 4-amino-2-methyl-5-(diphosphooxymethyl)pyrimidine. 2-[(2R,5Z)-2-carboxy-4-methylthiazol-5(2H)-ylidene]ethyl phosphate contacts are provided by residues glycine 181 and 201–202; that span reads IT.

Belongs to the thiamine-phosphate synthase family. The cofactor is Mg(2+).

The enzyme catalyses 2-[(2R,5Z)-2-carboxy-4-methylthiazol-5(2H)-ylidene]ethyl phosphate + 4-amino-2-methyl-5-(diphosphooxymethyl)pyrimidine + 2 H(+) = thiamine phosphate + CO2 + diphosphate. It catalyses the reaction 2-(2-carboxy-4-methylthiazol-5-yl)ethyl phosphate + 4-amino-2-methyl-5-(diphosphooxymethyl)pyrimidine + 2 H(+) = thiamine phosphate + CO2 + diphosphate. The catalysed reaction is 4-methyl-5-(2-phosphooxyethyl)-thiazole + 4-amino-2-methyl-5-(diphosphooxymethyl)pyrimidine + H(+) = thiamine phosphate + diphosphate. Its pathway is cofactor biosynthesis; thiamine diphosphate biosynthesis; thiamine phosphate from 4-amino-2-methyl-5-diphosphomethylpyrimidine and 4-methyl-5-(2-phosphoethyl)-thiazole: step 1/1. Condenses 4-methyl-5-(beta-hydroxyethyl)thiazole monophosphate (THZ-P) and 2-methyl-4-amino-5-hydroxymethyl pyrimidine pyrophosphate (HMP-PP) to form thiamine monophosphate (TMP). The protein is Thiamine-phosphate synthase of Actinobacillus pleuropneumoniae serotype 7 (strain AP76).